Consider the following 429-residue polypeptide: Phosphoribosylamine--glycine ligase (429 aa).

An ATP-grasp domain is found at 109–316; sequence KDFLARHKIP…LVELCLAACE (208 aa). 135 to 196 is a binding site for ATP; that stretch reads LREKGAPIVI…EEFLDGEEAS (62 aa). Positions 212–236 are disordered; sequence SQDHKRVGDKDTGPNTGGMGAYSPA. Residues 213 to 223 show a composition bias toward basic and acidic residues; the sequence is QDHKRVGDKDT. Mg(2+)-binding residues include E286 and N288.

This sequence belongs to the GARS family. As to quaternary structure, monomer. Mg(2+) is required as a cofactor. Mn(2+) serves as cofactor.

The enzyme catalyses 5-phospho-beta-D-ribosylamine + glycine + ATP = N(1)-(5-phospho-beta-D-ribosyl)glycinamide + ADP + phosphate + H(+). It functions in the pathway purine metabolism; IMP biosynthesis via de novo pathway; N(1)-(5-phospho-D-ribosyl)glycinamide from 5-phospho-alpha-D-ribose 1-diphosphate: step 2/2. Catalyzes the reversible conversion of phosphoribosylamine to glycinamide ribonucleotide, an enzymatic step in purine biosynthesis pathway. The polypeptide is Phosphoribosylamine--glycine ligase (purD) (Escherichia coli (strain K12)).